Here is a 274-residue protein sequence, read N- to C-terminus: Mitochondrial outer membrane protein porin 4 (274 aa).

N-acetylglycine is present on G2. S76 bears the Phosphoserine mark.

This sequence belongs to the eukaryotic mitochondrial porin (TC 1.B.8.1) family. In terms of tissue distribution, widely expressed.

Its subcellular location is the cell membrane. The protein resides in the mitochondrion outer membrane. Its function is as follows. Forms a channel through the mitochondrial outer membrane that allows diffusion of small hydrophilic molecules. The channel adopts an open conformation at low or zero membrane potential and a closed conformation at potentials above 30-40 mV. The open state has a weak anion selectivity whereas the closed state is cation-selective. Involved in plant growth and development at the vegetative and reproductive stages. Is important for leaf and pollen development and mitochondrial membrane potential steady state. May be involved in disease resistance. The sequence is that of Mitochondrial outer membrane protein porin 4 (VDAC4) from Arabidopsis thaliana (Mouse-ear cress).